The primary structure comprises 838 residues: Protein translocase subunit SecA (838 aa).

ATP contacts are provided by residues Gln-85, Gly-103–Thr-107, and Asp-493. 4 residues coordinate Zn(2+): Cys-823, Cys-825, Cys-834, and His-835.

Belongs to the SecA family. As to quaternary structure, monomer and homodimer. Part of the essential Sec protein translocation apparatus which comprises SecA, SecYEG and auxiliary proteins SecDF. Other proteins may also be involved. It depends on Zn(2+) as a cofactor.

The protein localises to the cell membrane. The protein resides in the cytoplasm. It carries out the reaction ATP + H2O + cellular proteinSide 1 = ADP + phosphate + cellular proteinSide 2.. In terms of biological role, part of the Sec protein translocase complex. Interacts with the SecYEG preprotein conducting channel. Has a central role in coupling the hydrolysis of ATP to the transfer of proteins into and across the cell membrane, serving as an ATP-driven molecular motor driving the stepwise translocation of polypeptide chains across the membrane. In Streptococcus gordonii (strain Challis / ATCC 35105 / BCRC 15272 / CH1 / DL1 / V288), this protein is Protein translocase subunit SecA.